A 410-amino-acid chain; its full sequence is Voltage-dependent chloride channel 1, chloroplastic (410 aa).

Over 1 to 110 (MYQSMNLSVS…RHLLSSFSSR (110 aa)) the chain is Lumenal, thylakoid. Residues 111–131 (VILSLIPPVFFFTSVAVVIAS) traverse the membrane as a helical segment. Over 132-147 (YNSAVALDWLPGIFPI) the chain is Stromal. A helical transmembrane segment spans residues 148–168 (LRSSSLPYQLTAPALALLLVF). Residues 169–315 (RTEASYSRYE…PLSYTRLTSR (147 aa)) are Lumenal, thylakoid-facing. Helical transmembrane passes span 316–336 (FLVFWHLTLPIILWDECHWIV) and 337–357 (VPATFISAASLFCIEEVGVLI). Over 358 to 410 (EEPFPMLALDELCDLVHSNIQEAVKSEKVIRNRIIAKIKLHEFKHSSNGRHRS) the chain is Lumenal, thylakoid.

It belongs to the anion channel-forming bestrophin (TC 1.A.46) family. Voltage-dependent chloride channel subfamily. In terms of tissue distribution, mostly expressed in flowers and leaves and, to a lower extent, in stems and roots.

Its subcellular location is the plastid. The protein localises to the chloroplast thylakoid membrane. The catalysed reaction is chloride(in) = chloride(out). More active at positive than at negative voltages. Repressed by the general anion channel inhibitors dithiocyanatostilbene-2,20-disulphonic acid (DIDS) and niflumic acid. Functionally, voltage-dependent chloride (Cl) channel critical for proton motive force (PMF) partitioning across the thylakoid membrane by anion influx into the lumen during illumination, thus being required for photoprotection under fluctuating light conditions. Influences thylakoid ultrastructure, including lumen size and organization. During photosynthetic response on transition from dark to low light, involved in a sequential mechanism of adaptation; VCCN1 and CLCe first trigger the activation of photoprotection, which is later down-regulated by KEA3 to a low steady state, while adjusting electron transport. On transition from low to high light, accelerates the activation of photoprotection by building up a pH gradient across the thylakoid membrane. This is Voltage-dependent chloride channel 1, chloroplastic from Arabidopsis thaliana (Mouse-ear cress).